Here is a 412-residue protein sequence, read N- to C-terminus: NAD-dependent dihydropyrimidine dehydrogenase subunit PreT (412 aa).

Residue Glu-286 participates in NAD(+) binding.

The protein belongs to the NADH dehydrogenase family. In terms of assembly, heterotetramer of 2 PreA and 2 PreT subunits.

It carries out the reaction 5,6-dihydrouracil + NAD(+) = uracil + NADH + H(+). The enzyme catalyses 5,6-dihydrothymine + NAD(+) = thymine + NADH + H(+). In terms of biological role, involved in pyrimidine base degradation. Catalyzes physiologically the reduction of uracil to 5,6-dihydrouracil (DHU) by using NADH as a specific cosubstrate. It also catalyzes the reverse reaction and the reduction of thymine to 5,6-dihydrothymine (DHT). This chain is NAD-dependent dihydropyrimidine dehydrogenase subunit PreT (preT), found in Escherichia coli O157:H7.